Reading from the N-terminus, the 344-residue chain is MGCNPPYHLSYRLRLLLLFTLCLTVVGWATSNYFVGAIQVIPKAKDFMASFHKVIHLGNEETLGHDGATKKPELANCPSVSPNLRGQSKLVFKPDLTLEEIEAENPKVSRGRYHPEECKALQRVAILIPHRNREKHLIYLLEHLHPFLQRQQLDYGIYIIHQTGSKKFNRAKLLNVGYLEALKEENWDCFVFHDVDLVPENDFNLYTCGDQPKHLVVGRNSTGYRLRYSKYFGGVTALSREQFLKVNGFSNNYWGWGGEDDDLRLRVELHKMKISRPKPDVGKYTMIFHTRDKGNEVNMGRMKLLQQMSRVWKTDGLSSCSYRLLSVEHNPLYANITVDFWTAA.

At 1–12 the chain is on the cytoplasmic side; it reads MGCNPPYHLSYR. Residues 13 to 38 form a helical; Signal-anchor for type II membrane protein membrane-spanning segment; that stretch reads LRLLLLFTLCLTVVGWATSNYFVGAI. At 39-344 the chain is on the lumenal side; that stretch reads QVIPKAKDFM…NITVDFWTAA (306 aa). Cysteine 77 and cysteine 118 are disulfide-bonded. UDP-alpha-D-galactose contacts are provided by residues 129-133, 168-170, and 195-196; these read PHRNR, FNR, and VD. Cysteine 189 and cysteine 208 are joined by a disulfide. Mn(2+) is bound at residue aspartate 196. N-linked (GlcNAc...) asparagine glycosylation occurs at asparagine 220. Tyrosine 224 and tryptophan 256 together coordinate UDP-alpha-D-galactose. 258-261 contacts N-acetyl-D-glucosamine; it reads GEDD. A Mn(2+)-binding site is contributed by histidine 289. 289 to 291 serves as a coordination point for UDP-alpha-D-galactose; sequence HTR. Arginine 301 is an N-acetyl-D-glucosamine binding site. A glycan (N-linked (GlcNAc...) asparagine) is linked at asparagine 335.

Belongs to the glycosyltransferase 7 family. In terms of assembly, interacts with SLC35A2/UGT1. It depends on Mn(2+) as a cofactor.

It localises to the golgi apparatus membrane. The protein resides in the secreted. It carries out the reaction N-acetyl-D-glucosamine + UDP-alpha-D-galactose = beta-D-galactosyl-(1-&gt;4)-N-acetyl-D-glucosamine + UDP + H(+). The enzyme catalyses a beta-D-GlcNAc-(1-&gt;3)-beta-D-Gal-(1-&gt;4)-beta-D-Glc-(1&lt;-&gt;1)-Cer(d18:1(4E)) + UDP-alpha-D-galactose = a neolactoside nLc4Cer(d18:1(4E)) + UDP + H(+). It catalyses the reaction 3-O-{beta-D-galactosyl-(1-&gt;3)-[6-O-sulfo-N-acetyl-beta-D-glucosaminyl-(1-&gt;6)]-N-acetyl-alpha-D-galactosaminyl}-L-seryl-[protein] + UDP-alpha-D-galactose = 3-O-{beta-D-galactosyl-(1-&gt;3)-[beta-D-galactosyl-(1-&gt;4)-6-O-sulfo-N-acetyl-beta-D-glucosaminyl-(1-&gt;6)]-N-acetyl-alpha-D-galactosaminyl}-L-seryl-[protein] + UDP + H(+). The catalysed reaction is 3-O-{beta-D-galactosyl-(1-&gt;3)-[6-O-sulfo-N-acetyl-beta-D-glucosaminyl-(1-&gt;6)]-N-acetyl-alpha-D-galactosaminyl}-L-threonyl-[protein] + UDP-alpha-D-galactose = 3-O-{beta-D-galactosyl-(1-&gt;3)-[beta-D-galactosyl-(1-&gt;4)-6-O-sulfo-N-acetyl-beta-D-glucosaminyl-(1-&gt;6)]-N-acetyl-alpha-D-galactosaminyl}-L-threonyl-[protein] + UDP + H(+). The protein operates within protein modification; protein glycosylation. It participates in glycolipid biosynthesis. Functionally, galactose (Gal) transferase involved in the synthesis of terminal N-acetyllactosamine (LacNac) unit present on glycan chains of glycoproteins and glycosphingolipids. Catalyzes the transfer of Gal residue via a beta1-&gt;4 linkage from UDP-Gal to the non-reducing terminal N-acetyl glucosamine 6-O-sulfate (6-O-sulfoGlcNAc) in the linearly growing chain of both N- and O-linked keratan sulfate proteoglycans. Cooperates with B3GNT7 N-acetyl glucosamine transferase and CHST6 and CHST1 sulfotransferases to construct and elongate mono- and disulfated disaccharide units [-&gt;3Galbeta1-&gt;4(6-sulfoGlcNAcbeta)1-&gt;] and [-&gt;3(6-sulfoGalbeta)1-&gt;4(6-sulfoGlcNAcbeta)1-&gt;] within keratan sulfate polymer. Transfers Gal residue via a beta1-&gt;4 linkage to terminal 6-O-sulfoGlcNAc within the LacNac unit of core 2 O-glycans forming 6-sulfo-sialyl-Lewis X (sLex). May contribute to the generation of sLex epitope on mucin-type glycoproteins that serve as ligands for SELL/L-selectin, a major regulator of leukocyte migration. In the biosynthesis pathway of neolacto-series glycosphingolipids, transfers Gal residue via a beta1-&gt;4 linkage to terminal GlcNAc of a lactotriaosylceramide (Lc3Cer) acceptor to form a neolactotetraosylceramide. In Mus musculus (Mouse), this protein is Beta-1,4-galactosyltransferase 4.